Here is a 345-residue protein sequence, read N- to C-terminus: Probable aldo-keto reductase 4 (345 aa).

Y63 acts as the Proton donor in catalysis. Position 130 (H130) interacts with substrate. S209 to G219 contacts NADP(+).

This sequence belongs to the aldo/keto reductase family.

The polypeptide is Probable aldo-keto reductase 4 (Arabidopsis thaliana (Mouse-ear cress)).